The sequence spans 479 residues: Poly(A) polymerase catalytic subunit (479 aa).

Catalysis depends on residues Asp-202 and Asp-204. Ca(2+) contacts are provided by Asp-202, Asp-204, and Asp-253.

Belongs to the poxviridae poly(A) polymerase catalytic subunit family. As to quaternary structure, heterodimer of a large (catalytic) subunit and a small (regulatory) subunit.

The enzyme catalyses RNA(n) + ATP = RNA(n)-3'-adenine ribonucleotide + diphosphate. In terms of biological role, polymerase that creates the 3'-poly(A) tail of mRNA's. The polypeptide is Poly(A) polymerase catalytic subunit (OPG063) (Homo sapiens (Human)).